The following is a 428-amino-acid chain: tRNA(Ile)-lysidine synthase (428 aa).

Residue 28–33 coordinates ATP; sequence SGGVDS.

It belongs to the tRNA(Ile)-lysidine synthase family.

The protein localises to the cytoplasm. The enzyme catalyses cytidine(34) in tRNA(Ile2) + L-lysine + ATP = lysidine(34) in tRNA(Ile2) + AMP + diphosphate + H(+). In terms of biological role, ligates lysine onto the cytidine present at position 34 of the AUA codon-specific tRNA(Ile) that contains the anticodon CAU, in an ATP-dependent manner. Cytidine is converted to lysidine, thus changing the amino acid specificity of the tRNA from methionine to isoleucine. This is tRNA(Ile)-lysidine synthase from Streptococcus pyogenes serotype M18 (strain MGAS8232).